The primary structure comprises 257 residues: Homeobox protein goosecoid (257 aa).

A DNA-binding region (homeobox) is located at residues 160–219; that stretch reads KRRHRTIFTDEQLEALENLFQETKYPDVGTREQLARKVHLREEKVEVWFKNRRAKWRRQK. Residues 213–257 are disordered; that stretch reads AKWRRQKRSSSEESENAEKWNKTSSSKASPEKREEEGKSDLDSDS. Positions 241–257 are enriched in basic and acidic residues; the sequence is SPEKREEEGKSDLDSDS.

The protein belongs to the paired homeobox family. Bicoid subfamily.

It is found in the nucleus. Its function is as follows. Regulates chordin (CHRD). May play a role in spatial programing within discrete embryonic fields or lineage compartments during organogenesis. In concert with NKX3-2, plays a role in defining the structural components of the middle ear; required for the development of the entire tympanic ring. Probably involved in the regulatory networks that define neural crest cell fate specification and determine mesoderm cell lineages in mammals. This is Homeobox protein goosecoid (GSC) from Pongo pygmaeus (Bornean orangutan).